The chain runs to 619 residues: Alpha-(1,6)-fucosyltransferase (619 aa).

Residues 1 to 17 (MLLVRQLFGASANSWAR) are Cytoplasmic-facing. A helical; Signal-anchor for type II membrane protein membrane pass occupies residues 18–38 (ALIIFVLAWIGLVYVFVVKLT). Topologically, residues 39–619 (NTQGQQAAGE…TAKLPLYAGI (581 aa)) are lumenal. 3 cysteine pairs are disulfide-bonded: Cys253–Cys315, Cys261–Cys279, and Cys267–Cys271. The GT23 domain maps to 255 to 539 (NARKLVCKLN…PDAAHRFKSL (285 aa)). Positions 345–351 (PRPPYLP) match the SH3-binding motif. The segment at 411-412 (RR) is important for donor substrate binding. A disulfide bridge links Cys511 with Cys518. The SH3 domain occupies 548–609 (QNAHNRRVVI…PSFKVEEKVD (62 aa)).

It belongs to the glycosyltransferase 23 family. Mn(2+) is required as a cofactor. Requires Mg(2+) as cofactor.

It localises to the golgi apparatus. The protein localises to the golgi stack membrane. The catalysed reaction is N(4)-{beta-D-GlcNAc-(1-&gt;2)-alpha-D-Man-(1-&gt;3)-[beta-D-GlcNAc-(1-&gt;2)-alpha-D-Man-(1-&gt;6)]-beta-D-Man-(1-&gt;4)-beta-D-GlcNAc-(1-&gt;4)-beta-D-GlcNAc}-L-asparaginyl-[protein] + GDP-beta-L-fucose = an N(4)-{beta-D-GlcNAc-(1-&gt;2)-alpha-D-Man-(1-&gt;3)-[beta-D-GlcNAc-(1-&gt;2)-alpha-D-Man-(1-&gt;6)]-beta-D-Man-(1-&gt;4)-beta-D-GlcNAc-(1-&gt;4)-[alpha-L-Fuc-(1-&gt;6)]-beta-D-GlcNAc}-L-asparaginyl-[protein] + GDP + H(+). Its pathway is protein modification; protein glycosylation. Its function is as follows. Catalyzes the addition of fucose in alpha 1-6 linkage to the first GlcNAc residue, next to the peptide chains in N-glycans. The addition is prevented if the GlcNAc residue is already fucosylated. This chain is Alpha-(1,6)-fucosyltransferase (FucT6), found in Drosophila melanogaster (Fruit fly).